The sequence spans 338 residues: Ketol-acid reductoisomerase (NADP(+)) (338 aa).

The region spanning 1–181 is the KARI N-terminal Rossmann domain; that stretch reads MKVYYDKDAD…GGTKGGVIET (181 aa). Residues 24 to 27, Arg47, Ser52, and 82 to 85 each bind NADP(+); these read YGSQ and DESQ. His107 is an active-site residue. Gly133 lines the NADP(+) pocket. A KARI C-terminal knotted domain is found at 182-327; sequence NFREETETDL…AELRAMMPWI (146 aa). 4 residues coordinate Mg(2+): Asp190, Glu194, Glu226, and Glu230. Residue Ser251 coordinates substrate.

It belongs to the ketol-acid reductoisomerase family. Mg(2+) is required as a cofactor.

It carries out the reaction (2R)-2,3-dihydroxy-3-methylbutanoate + NADP(+) = (2S)-2-acetolactate + NADPH + H(+). It catalyses the reaction (2R,3R)-2,3-dihydroxy-3-methylpentanoate + NADP(+) = (S)-2-ethyl-2-hydroxy-3-oxobutanoate + NADPH + H(+). It functions in the pathway amino-acid biosynthesis; L-isoleucine biosynthesis; L-isoleucine from 2-oxobutanoate: step 2/4. Its pathway is amino-acid biosynthesis; L-valine biosynthesis; L-valine from pyruvate: step 2/4. Involved in the biosynthesis of branched-chain amino acids (BCAA). Catalyzes an alkyl-migration followed by a ketol-acid reduction of (S)-2-acetolactate (S2AL) to yield (R)-2,3-dihydroxy-isovalerate. In the isomerase reaction, S2AL is rearranged via a Mg-dependent methyl migration to produce 3-hydroxy-3-methyl-2-ketobutyrate (HMKB). In the reductase reaction, this 2-ketoacid undergoes a metal-dependent reduction by NADPH to yield (R)-2,3-dihydroxy-isovalerate. The chain is Ketol-acid reductoisomerase (NADP(+)) from Chromobacterium violaceum (strain ATCC 12472 / DSM 30191 / JCM 1249 / CCUG 213 / NBRC 12614 / NCIMB 9131 / NCTC 9757 / MK).